The chain runs to 570 residues: Methionine--tRNA ligase (570 aa).

Residues 11–21 (PYVQTVPHLGN) carry the 'HIGH' region motif. Zn(2+) is bound by residues Cys-143, Cys-146, Cys-156, and Cys-159. Residues 333 to 337 (KFSKS) carry the 'KMSKS' region motif. Lys-336 contributes to the ATP binding site.

It belongs to the class-I aminoacyl-tRNA synthetase family. MetG type 1 subfamily. Zn(2+) is required as a cofactor.

The protein localises to the cytoplasm. The enzyme catalyses tRNA(Met) + L-methionine + ATP = L-methionyl-tRNA(Met) + AMP + diphosphate. Functionally, is required not only for elongation of protein synthesis but also for the initiation of all mRNA translation through initiator tRNA(fMet) aminoacylation. The chain is Methionine--tRNA ligase from Pyrobaculum calidifontis (strain DSM 21063 / JCM 11548 / VA1).